We begin with the raw amino-acid sequence, 355 residues long: Tyrosine recombinase XerC (355 aa).

The 86-residue stretch at 4–89 (TQFDGDIDSF…AVRGFFAWAY (86 aa)) folds into the Core-binding (CB) domain. A disordered region spans residues 137–181 (KDDGGAAAAPGSGKAAGKTADKSADTVNRSEAPARADKRDNARVT). Positions 141 to 154 (GAAAAPGSGKAAGK) are enriched in low complexity. The 192-residue stretch at 158–349 (KSADTVNRSE…SIEQLKNRYG (192 aa)) folds into the Tyr recombinase domain. Residues 168 to 178 (APARADKRDNA) are compositionally biased toward basic and acidic residues. Active-site residues include Arg-200, Lys-224, His-301, Arg-304, and His-327. Tyr-336 functions as the O-(3'-phospho-DNA)-tyrosine intermediate in the catalytic mechanism.

Belongs to the 'phage' integrase family. XerC subfamily. In terms of assembly, forms a cyclic heterotetrameric complex composed of two molecules of XerC and two molecules of XerD.

Its subcellular location is the cytoplasm. In terms of biological role, site-specific tyrosine recombinase, which acts by catalyzing the cutting and rejoining of the recombining DNA molecules. The XerC-XerD complex is essential to convert dimers of the bacterial chromosome into monomers to permit their segregation at cell division. It also contributes to the segregational stability of plasmids. The chain is Tyrosine recombinase XerC from Bifidobacterium longum (strain DJO10A).